Consider the following 432-residue polypeptide: 3-oxo-tetronate kinase (432 aa).

Residues His155, Ser272, Ala324, Gly344, Glu348, 370-373 (GGET), and Gly414 contribute to the ATP site.

Belongs to the four-carbon acid sugar kinase family.

The catalysed reaction is 3-dehydro-L-erythronate + ATP = 3-dehydro-4-O-phospho-L-erythronate + ADP + H(+). It carries out the reaction 3-dehydro-D-erythronate + ATP = 3-dehydro-4-O-phospho-D-erythronate + ADP + H(+). Catalyzes the ATP-dependent phosphorylation of 3-oxo-tetronate to 3-oxo-tetronate 4-phosphate. The sequence is that of 3-oxo-tetronate kinase from Cupriavidus necator (strain ATCC 17699 / DSM 428 / KCTC 22496 / NCIMB 10442 / H16 / Stanier 337) (Ralstonia eutropha).